A 108-amino-acid chain; its full sequence is Thioredoxin (108 aa).

Residues 2 to 108 (NKIIELTDQN…LKEFLDENIN (107 aa)) form the Thioredoxin domain. Cysteine 32 and cysteine 35 are oxidised to a cystine.

Belongs to the thioredoxin family.

In terms of biological role, participates in various redox reactions through the reversible oxidation of its active center dithiol to a disulfide and catalyzes dithiol-disulfide exchange reactions. In Buchnera aphidicola subsp. Acyrthosiphon pisum (strain APS) (Acyrthosiphon pisum symbiotic bacterium), this protein is Thioredoxin (trxA).